Reading from the N-terminus, the 464-residue chain is L-aspartate oxidase (464 aa).

Residues 8-11 (SGLA) and 37-44 (NSYLAQAG) contribute to the FAD site. Arginine 248 serves as the catalytic Proton donor/acceptor. Residues glutamate 329 and 345–346 (SL) each bind FAD.

Belongs to the FAD-dependent oxidoreductase 2 family. NadB subfamily. It depends on FAD as a cofactor.

Its subcellular location is the cytoplasm. It carries out the reaction L-aspartate + O2 = iminosuccinate + H2O2. It participates in cofactor biosynthesis; NAD(+) biosynthesis; iminoaspartate from L-aspartate (oxidase route): step 1/1. Functionally, catalyzes the oxidation of L-aspartate to iminoaspartate, the first step in the de novo biosynthesis of NAD(+). In Pyrococcus furiosus (strain ATCC 43587 / DSM 3638 / JCM 8422 / Vc1), this protein is L-aspartate oxidase (nadB).